A 276-amino-acid polypeptide reads, in one-letter code: Pyridinium-3,5-bisthiocarboxylic acid mononucleotide synthase (276 aa).

The Nucleophile and sulfur donor role is filled by cysteine 176. Cysteine 176 bears the 2,3-didehydroalanine (Cys) mark.

It belongs to the LarE family.

The enzyme catalyses pyridinium-3,5-dicarboxylate mononucleotide + [LarE protein]-L-cysteine + ATP = [LarE protein]-dehydroalanine + pyridinium-3-carboxylate-5-thiocarboxylate mononucleotide + AMP + diphosphate + H(+). It carries out the reaction [LarE protein]-L-cysteine + pyridinium-3-carboxylate-5-thiocarboxylate mononucleotide + ATP = pyridinium-3,5-bisthiocarboxylate mononucleotide + [LarE protein]-dehydroalanine + AMP + diphosphate + H(+). In terms of biological role, involved in the biosynthesis of a nickel-pincer cofactor ((SCS)Ni(II) pincer complex). Catalyzes the ATP-dependent incorporation of two sulfur atoms in pyridinium-3,5-biscarboxylic acid mononucleotide (P2CMN) to yield pyridinium-3,5-bisthiocarboxylic acid mononucleotide (P2TMN). The source of sulfur is the enzyme itself: Cys-176 of LarE is the sulfur donor, thereby being converted into dehydroalanine, and is not regenerated in vivo. Thus, two molecules of LarE undergo sacrificial sulfur transfer to create one P2TMN. Binds nickel. Is required for the activation of the lactate racemase LarA. May also be involved in the activation of other nickel-pincer cofactor-dependent enzymes. This Lactiplantibacillus plantarum (strain ATCC BAA-793 / NCIMB 8826 / WCFS1) (Lactobacillus plantarum) protein is Pyridinium-3,5-bisthiocarboxylic acid mononucleotide synthase.